The following is a 490-amino-acid chain: Probable G-protein coupled receptor npr-8 (490 aa).

At 1–55 (MEVKDIDNYCDRGISPNASNYLTYPFDGLCLQKFFYQLQTSLRRFTPYEEIIYTT) the chain is on the extracellular side. Residue asparagine 17 is glycosylated (N-linked (GlcNAc...) asparagine). The chain crosses the membrane as a helical span at residues 56-76 (VYIIISVAAVIGNGLVIMAVV). The Cytoplasmic portion of the chain corresponds to 77-86 (RKKTMRTNRN). The chain crosses the membrane as a helical span at residues 87–107 (VLILNLALSNLILAITNIPFL). Residues 108–125 (WLPSIDFEFPYSRFFCKF) are Extracellular-facing. The chain crosses the membrane as a helical span at residues 126–146 (ANVLPGSNIYCSTLTISVMAI). Over 147–166 (DRYYSVKKLKIASNRKQCFH) the chain is Cytoplasmic. The chain crosses the membrane as a helical span at residues 167-187 (AVLVSLAIWIVSFILSLPLLL). At 188–236 (YYETSMLYVMREIRVVDQSGQEVIRSYGWRQCRLVSAGRLPDITQSIQL) the chain is on the extracellular side. Residues 237 to 257 (LMSILQVAFLYIVPLFVLSIF) traverse the membrane as a helical segment. The Cytoplasmic portion of the chain corresponds to 258 to 331 (NVKLTRFLKT…QRTNRTTSLL (74 aa)). Residues 272–322 (MSKTRAPPKRFDRSDSHHNSLKNNNNHTSSLRSPSMPSIRSSITERNKTNQ) are disordered. Positions 280–289 (KRFDRSDSHH) are enriched in basic and acidic residues. Positions 292-313 (LKNNNNHTSSLRSPSMPSIRSS) are enriched in low complexity. Residues 332–352 (IAMAGSYAALWFPFTLITFLI) traverse the membrane as a helical segment. Topologically, residues 353–374 (DFELIINQDYVNLVERIDQTCK) are extracellular. A helical membrane pass occupies residues 375 to 395 (MVSMLSICVNPFLYGFLNTNF). Topologically, residues 396–490 (RHEFSDIYYR…DDDIEKDSFV (95 aa)) are cytoplasmic.

Belongs to the G-protein coupled receptor 1 family.

It is found in the cell membrane. In terms of biological role, not known. Putative receptor. The protein is Probable G-protein coupled receptor npr-8 of Caenorhabditis elegans.